We begin with the raw amino-acid sequence, 127 residues long: Tyrosine-protein phosphatase 2 (127 aa).

A Tyrosine-protein phosphatase domain is found at 1 to 127 (QGSKVIVMVT…PRDCEAPILV (127 aa)). The segment covering 63-81 (VYDNDDGTEQNDEQTEEEP) has biased composition (acidic residues). Positions 63–82 (VYDNDDGTEQNDEQTEEEPE) are disordered.

It belongs to the protein-tyrosine phosphatase family.

The enzyme catalyses O-phospho-L-tyrosyl-[protein] + H2O = L-tyrosyl-[protein] + phosphate. This Styela plicata (Wrinkled sea squirt) protein is Tyrosine-protein phosphatase 2 (STY-2).